The primary structure comprises 376 residues: C2H2 type master regulator of conidiophore development brlA (376 aa).

The span at 20-29 (TSFSSASSSA) shows a compositional bias: low complexity. Disordered regions lie at residues 20–47 (TSFS…ELSL), 197–229 (HHHH…ASPN), and 241–267 (EAQR…PESG). A compositionally biased stretch (polar residues) spans 34 to 44 (TPSSRRSTPNE). Residues 197–209 (HHHHHNHHQHHHA) are compositionally biased toward basic residues. Residues 219-229 (QLHSNTGASPN) are compositionally biased toward polar residues. The segment covering 241–256 (EAQRKTSELQRAQIRE) has biased composition (basic and acidic residues). The segment at 277-301 (CKCDYPGCNKAFRRNEHLKRHKQTF) adopts a C2H2-type 1; degenerate zinc-finger fold. The C2H2-type 2 zinc finger occupies 309–332 (FSCEFCGKDQFNRQDNLNNHRKLH). Positions 351–376 (IIEHEERSRKRRAPPKSKAEKRDYDF) are disordered. Over residues 367–376 (SKAEKRDYDF) the composition is skewed to basic and acidic residues.

The protein localises to the nucleus. BrlA, abaA and wetA are pivotal regulators of conidiophore development and conidium maturation. They act individually and together to regulate their own expression and that of numerous other sporulation-specific genes. Binds promoters of target genes at brlA response elements (BREs) containing the conserved sequence 5'-(C/A)(A/G)AGGG(G/A)-3'. The sequence is that of C2H2 type master regulator of conidiophore development brlA from Hapsidospora chrysogena (Acremonium chrysogenum).